Here is a 348-residue protein sequence, read N- to C-terminus: Ribosomal RNA small subunit methyltransferase C (348 aa).

This sequence belongs to the methyltransferase superfamily. RsmC family. Monomer.

The protein localises to the cytoplasm. It carries out the reaction guanosine(1207) in 16S rRNA + S-adenosyl-L-methionine = N(2)-methylguanosine(1207) in 16S rRNA + S-adenosyl-L-homocysteine + H(+). Its function is as follows. Specifically methylates the guanine in position 1207 of 16S rRNA in the 30S particle. This chain is Ribosomal RNA small subunit methyltransferase C, found in Pectobacterium atrosepticum (strain SCRI 1043 / ATCC BAA-672) (Erwinia carotovora subsp. atroseptica).